The chain runs to 112 residues: Large ribosomal subunit protein bL17 (112 aa).

This sequence belongs to the bacterial ribosomal protein bL17 family. Part of the 50S ribosomal subunit. Contacts protein L32.

The chain is Large ribosomal subunit protein bL17 from Carboxydothermus hydrogenoformans (strain ATCC BAA-161 / DSM 6008 / Z-2901).